The following is a 62-amino-acid chain: Enterocin E-760 (62 aa).

The protein localises to the secreted. Bacteriocin active against the Gram-negative bacteria S.enteritidis, S.choleraesuis, S.typhimurium, S.gallinarum, E.coli O157:H7, Y.enterocolitica, C.freundii, K.pneumoniae, S.dysentriae, P.aeruginosa, P.mirabilis, M.morganii, C.jejuni and 20 other Campylobacter isolates, and the Gram-positive bacteria S.aureus, S.epidermidis and L.monocytogenes. The chain is Enterocin E-760 from Enterococcus sp.